The primary structure comprises 277 residues: Small ribosomal subunit protein uS3 (277 aa).

Residues 43-111 (IRQLMSTGME…QVQLNILEVK (69 aa)) form the KH type-2 domain. Over residues 218–228 (QQAAAAPSRGR) the composition is skewed to low complexity. The interval 218–277 (QQAAAAPSRGRGASDRPGRPGGADRGDRRRRTDRPAAEAAPAAEAPAVEAAAPAVEGGQA) is disordered. A compositionally biased stretch (basic and acidic residues) spans 229 to 244 (GASDRPGRPGGADRGD). The segment covering 254-277 (AEAAPAAEAPAVEAAAPAVEGGQA) has biased composition (low complexity).

This sequence belongs to the universal ribosomal protein uS3 family. In terms of assembly, part of the 30S ribosomal subunit. Forms a tight complex with proteins S10 and S14.

Binds the lower part of the 30S subunit head. Binds mRNA in the 70S ribosome, positioning it for translation. The chain is Small ribosomal subunit protein uS3 from Arthrobacter sp. (strain FB24).